The primary structure comprises 85 residues: High affinity immunoglobulin epsilon receptor subunit gamma (85 aa).

The signal sequence occupies residues 1 to 18 (MIPAVVLLLLLLVEQAAA). The Extracellular portion of the chain corresponds to 19–23 (LGEPQ). Residues 24-44 (LCYILDAILFLYGIVLTLLYC) traverse the membrane as a helical segment. Residues 45–85 (RLKLQVRKAATASEKSDGIYTGLSTRTQETYETLKHEKPPQ) are Cytoplasmic-facing. One can recognise an ITAM domain in the interval 53 to 81 (AATASEKSDGIYTGLSTRTQETYETLKHE). The residue at position 64 (Y64) is a Phosphotyrosine. Residue S68 is modified to Phosphoserine. Y75 carries the post-translational modification Phosphotyrosine. The residue at position 77 (T77) is a Phosphothreonine.

It belongs to the CD3Z/FCER1G family. In terms of assembly, igE Fc receptor is a tetramer of an alpha chain, a beta chain, and two disulfide linked gamma chains. Associates with FCGR1A; forms a functional signaling complex. The signaling subunit of immunoglobulin gamma (IgG) Fc receptor complex. As a homodimer or a heterodimer of CD247 and FCER1G, associates with the ligand binding subunit FCGR3A to form a functional receptor complex. Associates with CLEC6A. Interacts with CLEC4E. Interacts (via ITAM domain) with SYK (via SH2 domains); activates SYK, enabling integrin-mediated activation of neutrophils and macrophages. Interacts with CSF2RB and recruits SYK in response to IL3 stimulation; this interaction is direct. Interacts with CD300LH; the interaction may be indirect. Interacts with CD300LD. Interacts with TARM1.

It localises to the cell membrane. Functionally, adapter protein containing an immunoreceptor tyrosine-based activation motif (ITAM) that transduces activation signals from various immunoreceptors. As a component of the high-affinity immunoglobulin E (IgE) receptor, mediates allergic inflammatory signaling in mast cells. As a constitutive component of interleukin-3 receptor complex, selectively mediates interleukin 4/IL4 production by basophils priming T-cells toward effector T-helper 2 subset. Associates with pattern recognition receptors CLEC4D and CLEC4E to form a functional signaling complex in myeloid cells. Binding of mycobacterial trehalose 6,6'-dimycolate (TDM) to this receptor complex leads to phosphorylation of ITAM, triggering activation of SYK, CARD9 and NF-kappa-B, consequently driving maturation of antigen-presenting cells and shaping antigen-specific priming of T-cells toward effector T-helper 1 and T-helper 17 cell subtypes. May function cooperatively with other activating receptors. Functionally linked to integrin beta-2/ITGB2-mediated neutrophil activation. Also involved in integrin alpha-2/ITGA2-mediated platelet activation. The protein is High affinity immunoglobulin epsilon receptor subunit gamma (FCER1G) of Bos taurus (Bovine).